We begin with the raw amino-acid sequence, 54 residues long: Large ribosomal subunit protein bL33 (54 aa).

This sequence belongs to the bacterial ribosomal protein bL33 family.

The sequence is that of Large ribosomal subunit protein bL33 from Corynebacterium jeikeium (strain K411).